The sequence spans 167 residues: Putative C-type lectin-like domain family 1 (167 aa).

Over Met-1–Ser-67 the chain is Cytoplasmic. Residues Phe-68 to Ile-88 traverse the membrane as a helical; Signal-anchor for type II membrane protein segment. The Extracellular portion of the chain corresponds to Lys-89 to Ile-167. 3 N-linked (GlcNAc...) asparagine glycosylation sites follow: Asn-109, Asn-140, and Asn-149. The C-type lectin; atypical domain occupies Ser-116–Ile-167.

In terms of tissue distribution, expressed in spleen, lymph node, and tonsil. Lower expression in peripheral blood, bone marrow, and colon. No expression detected in thymus. Highly expressed in dendritic and B-cells.

The protein localises to the cell membrane. May function in mediating immune cell-cell interactions. May act as a T-cell costimulatory molecule, enhancing anti-CD3-induced proliferation. May play a role in the interaction of dendritic cells with T-cells and the cells of the adaptive immune response. The protein is Putative C-type lectin-like domain family 1 of Homo sapiens (Human).